The chain runs to 587 residues: MDDRSSKKRKLKDVNGAKASGAATDVTVKPKKLKKAQSQEEVEPKVEKGSKKEEEENDWSDEEENEAADDAGHSSDSDVDEGDDTIAAPAKEADGDIPGDLTLPTTAESEAQAFSELNLSENTMKAIEEMGFTKMTEIQRRGIPPLLAGKDVLGAAKTGSGKTLAFLIPAVEMLRSLKFKPRNGTGVIVVSPTRELALQIFGVARDLMKHHSQTYGIVIGGANRRAEAEKLSKGVNLLIATPGRLLDHLQNTPFVFKNLRSLVIDEADRILEIGFEDEMRQIIKILPKERQSMLFSATQTTKVEDLARVSLRPGPLYLNVDEEKEYSTVEGLEQGYVVCEADKRFILLFSFLQKMKKKKIIVFFSSCNSVKYYAELLNYIDCQVLDLHGKQKQQKRTNTFFEFCNADRGTLICTDVAARGLDIPAVDWIVQFDPPDDPRDYIHRVGRTARGTNKKGRSLMFLLPSEVGFLTYLKQARVPVVEFDFPTKSIKNVQSQLEKLIGKNYYLNSSAKDGFRSYLHAYASHSLRSVFDINKLDLAKVAKSFGFATPPRVDIQLGASMSKDKKAGGRRAYGSQPRQGGTYGKRR.

Basic residues predominate over residues 1-11 (MDDRSSKKRKL). The segment at 1–103 (MDDRSSKKRK…DGDIPGDLTL (103 aa)) is disordered. Basic and acidic residues predominate over residues 42–54 (VEPKVEKGSKKEE). Positions 55–69 (EENDWSDEEENEAAD) are enriched in acidic residues. The Q motif signature appears at 112-140 (QAFSELNLSENTMKAIEEMGFTKMTEIQR). The region spanning 143–317 (IPPLLAGKDV…RVSLRPGPLY (175 aa)) is the Helicase ATP-binding domain. 156-163 (AKTGSGKT) contributes to the ATP binding site. The DEAD box signature appears at 265–268 (DEAD). The Helicase C-terminal domain maps to 331 to 501 (GLEQGYVVCE…NVQSQLEKLI (171 aa)). Positions 558-587 (GASMSKDKKAGGRRAYGSQPRQGGTYGKRR) are disordered.

This sequence belongs to the DEAD box helicase family. DDX18/HAS1 subfamily. Associates in the nucleolus with the 60S and pre-60S ribosomal subunits.

The protein localises to the nucleus. It is found in the nucleolus. The catalysed reaction is ATP + H2O = ADP + phosphate + H(+). In terms of biological role, ATP-dependent RNA helicase involved in 40S ribosomal subunit biogenesis. Required for the processing and cleavage of 35S pre-rRNA at sites A0, A1, and A2, leading to mature 18S rRNA. In Pyricularia oryzae (strain 70-15 / ATCC MYA-4617 / FGSC 8958) (Rice blast fungus), this protein is ATP-dependent RNA helicase HAS1 (HAS1).